The chain runs to 412 residues: Subtilisin-like protease 6 (412 aa).

An N-terminal signal peptide occupies residues 1–20; it reads MGFITKAIPIVLAALSTVNG. Residues 21–127 constitute a propeptide that is removed on maturation; sequence ARILEAGPHA…VRATTNGTNL (107 aa). Residues 36–120 enclose the Inhibitor I9 domain; the sequence is KYIVVMKKDV…FIEPDFVVRA (85 aa). Residues 135-412 form the Peptidase S8 domain; it reads SWGLARVSTR…SKLIYNGSGK (278 aa). Catalysis depends on charge relay system residues aspartate 167 and histidine 198. Asparagine 252, asparagine 264, and asparagine 325 each carry an N-linked (GlcNAc...) asparagine glycan. The active-site Charge relay system is the serine 358. N-linked (GlcNAc...) asparagine glycosylation occurs at asparagine 408.

Belongs to the peptidase S8 family.

It localises to the secreted. In terms of biological role, secreted subtilisin-like serine protease with keratinolytic activity that contributes to pathogenicity. The sequence is that of Subtilisin-like protease 6 (SUB6) from Trichophyton verrucosum (strain HKI 0517).